Here is a 460-residue protein sequence, read N- to C-terminus: Phosphoenolpyruvate carboxylase (460 aa).

It belongs to the PEPCase type 2 family. In terms of assembly, homotetramer. The cofactor is Mg(2+).

It catalyses the reaction oxaloacetate + phosphate = phosphoenolpyruvate + hydrogencarbonate. Its function is as follows. Catalyzes the irreversible beta-carboxylation of phosphoenolpyruvate (PEP) to form oxaloacetate (OAA), a four-carbon dicarboxylic acid source for the tricarboxylic acid cycle. This chain is Phosphoenolpyruvate carboxylase, found in Pyrobaculum arsenaticum (strain DSM 13514 / JCM 11321 / PZ6).